The chain runs to 268 residues: Kynurenine formamidase (268 aa).

Positions H33–W37 match the HGGXW motif. S107 serves as the catalytic Nucleophile. Active-site residues include D219 and H251.

It belongs to the kynurenine formamidase family. In terms of assembly, homodimer.

It catalyses the reaction N-formyl-L-kynurenine + H2O = L-kynurenine + formate + H(+). It functions in the pathway amino-acid degradation; L-tryptophan degradation via kynurenine pathway; L-kynurenine from L-tryptophan: step 2/2. In terms of biological role, catalyzes the hydrolysis of N-formyl-L-kynurenine to L-kynurenine, the second step in the kynurenine pathway of tryptophan degradation. Kynurenine may be further oxidized to nicotinic acid, NAD(H) and NADP(H). Required for elimination of toxic metabolites. The polypeptide is Kynurenine formamidase (Scheffersomyces stipitis (strain ATCC 58785 / CBS 6054 / NBRC 10063 / NRRL Y-11545) (Yeast)).